A 183-amino-acid polypeptide reads, in one-letter code: Capsid protein (183 aa).

Positions 136 to 183 (NAPILSTLPETTVVRRRGRSPRRRTPSPRRRRSQSPRRRRSQSRESQC) are disordered. A compositionally biased stretch (basic residues) spans 149–176 (VRRRGRSPRRRTPSPRRRRSQSPRRRRS). A phosphoserine; by host mark is found at serine 155, serine 162, and serine 170. The 1; half-length repeat unit spans residues 155-161 (SPRRRTP). Positions 155-177 (SPRRRTPSPRRRRSQSPRRRRSQ) are 3 X 8 AA repeats of S-P-R-R-R-[PR]-S-Q. The short motif at 158–175 (RRTPSPRRRRSQSPRRRR) is the Bipartite nuclear localization signal element. Tandem repeats lie at residues 162 to 169 (SPRRRRSQ) and 170 to 177 (SPRRRRSQ). The tract at residues 177–183 (QSRESQC) is RNA binding.

This sequence belongs to the orthohepadnavirus core antigen family. Homodimerizes, then multimerizes. Interacts with cytosol exposed regions of viral L glycoprotein present in the reticulum-to-Golgi compartment. Interacts with human FLNB. Phosphorylated form interacts with host importin alpha; this interaction depends on the exposure of the NLS, which itself depends upon genome maturation and/or phosphorylation of the capsid protein. Interacts with host NUP153. In terms of processing, phosphorylated by host SRPK1, SRPK2, and maybe protein kinase C or GAPDH. Phosphorylation is critical for pregenomic RNA packaging. Protein kinase C phosphorylation is stimulated by HBx protein and may play a role in transport of the viral genome to the nucleus at the late step during the viral replication cycle.

The protein resides in the virion. The protein localises to the host cytoplasm. Its function is as follows. Self assembles to form an icosahedral capsid. Most capsids appear to be large particles with an icosahedral symmetry of T=4 and consist of 240 copies of capsid protein, though a fraction forms smaller T=3 particles consisting of 180 capsid proteins. Entering capsids are transported along microtubules to the nucleus. Phosphorylation of the capsid is thought to induce exposure of nuclear localization signal in the C-terminal portion of the capsid protein that allows binding to the nuclear pore complex via the importin (karyopherin-) alpha and beta. Capsids are imported in intact form through the nuclear pore into the nuclear basket, where it probably binds NUP153. Only capsids that contain the mature viral genome can release the viral DNA and capsid protein into the nucleoplasm. Immature capsids get stuck in the basket. Capsids encapsulate the pre-genomic RNA and the P protein. Pre-genomic RNA is reverse-transcribed into DNA while the capsid is still in the cytoplasm. The capsid can then either be directed to the nucleus, providing more genomes for transcription, or bud through the endoplasmic reticulum to provide new virions. The chain is Capsid protein from Hepatitis B virus genotype D subtype ayw (isolate Italy/CI/1992) (HBV-D).